A 78-amino-acid polypeptide reads, in one-letter code: NAD(P)H-quinone oxidoreductase subunit O (78 aa).

Belongs to the complex I NdhO subunit family. NDH-1 can be composed of about 15 different subunits; different subcomplexes with different compositions have been identified which probably have different functions.

The protein localises to the cellular thylakoid membrane. It catalyses the reaction a plastoquinone + NADH + (n+1) H(+)(in) = a plastoquinol + NAD(+) + n H(+)(out). It carries out the reaction a plastoquinone + NADPH + (n+1) H(+)(in) = a plastoquinol + NADP(+) + n H(+)(out). Functionally, NDH-1 shuttles electrons from an unknown electron donor, via FMN and iron-sulfur (Fe-S) centers, to quinones in the respiratory and/or the photosynthetic chain. The immediate electron acceptor for the enzyme in this species is believed to be plastoquinone. Couples the redox reaction to proton translocation, and thus conserves the redox energy in a proton gradient. Cyanobacterial NDH-1 also plays a role in inorganic carbon-concentration. This chain is NAD(P)H-quinone oxidoreductase subunit O, found in Prochlorococcus marinus (strain AS9601).